Consider the following 59-residue polypeptide: Large ribosomal subunit protein uL30 (59 aa).

The protein belongs to the universal ribosomal protein uL30 family. In terms of assembly, part of the 50S ribosomal subunit.

In Staphylococcus aureus (strain JH1), this protein is Large ribosomal subunit protein uL30.